Consider the following 420-residue polypeptide: Glutamate-1-semialdehyde 2,1-aminomutase (420 aa).

Lys-261 is modified (N6-(pyridoxal phosphate)lysine).

The protein belongs to the class-III pyridoxal-phosphate-dependent aminotransferase family. HemL subfamily. The cofactor is pyridoxal 5'-phosphate.

Its subcellular location is the cytoplasm. The enzyme catalyses (S)-4-amino-5-oxopentanoate = 5-aminolevulinate. It functions in the pathway porphyrin-containing compound metabolism; protoporphyrin-IX biosynthesis; 5-aminolevulinate from L-glutamyl-tRNA(Glu): step 2/2. The polypeptide is Glutamate-1-semialdehyde 2,1-aminomutase (Thermoplasma volcanium (strain ATCC 51530 / DSM 4299 / JCM 9571 / NBRC 15438 / GSS1)).